We begin with the raw amino-acid sequence, 370 residues long: CST complex subunit STN1 (370 aa).

The tract at residues 1–187 is interaction with CTC1; sequence MESNSSQCED…KVYDQPFHSP (187 aa). Residues 57 to 157 constitute a DNA-binding region (OB); the sequence is VDILGTVIGV…EIHATTYYKV (101 aa). Winged helix-turn-helix (wHTH) stretches follow at residues 193–297 and 298–370; these read EALS…YVTR and EDKE…YTAF.

This sequence belongs to the STN1 family. Component of the CST complex, composed of TEN1/C17orf106, CTC1/C17orf68 and STN1; in the complex interacts directly with TEN1 and CTC1. Interacts with ACD/TPP1, POT1 and POLA1.

The protein resides in the nucleus. The protein localises to the chromosome. It localises to the telomere. In terms of biological role, component of the CST complex proposed to act as a specialized replication factor promoting DNA replication under conditions of replication stress or natural replication barriers such as the telomere duplex. The CST complex binds single-stranded DNA with high affinity in a sequence-independent manner, while isolated subunits bind DNA with low affinity by themselves. Initially the CST complex has been proposed to protect telomeres from DNA degradation. However, the CST complex has been shown to be involved in several aspects of telomere replication. The CST complex inhibits telomerase and is involved in telomere length homeostasis; it is proposed to bind to newly telomerase-synthesized 3' overhangs and to terminate telomerase action implicating the association with the ACD:POT1 complex thus interfering with its telomerase stimulation activity. The CST complex is also proposed to be involved in fill-in synthesis of the telomeric C-strand probably implicating recruitment and activation of DNA polymerase alpha. The CST complex facilitates recovery from many forms of exogenous DNA damage; seems to be involved in the re-initiation of DNA replication at repaired forks and/or dormant origins. Required for efficicient replication of the duplex region of the telomere. Promotes efficient replication of lagging-strand telomeres. Promotes general replication start following replication-fork stalling implicating new origin firing. May be in involved in C-strand fill-in during late S/G2 phase independent of its role in telomere duplex replication. This chain is CST complex subunit STN1, found in Bos taurus (Bovine).